The primary structure comprises 301 residues: Putative S-adenosyl-L-methionine-dependent methyltransferase MUL_0450 (301 aa).

S-adenosyl-L-methionine contacts are provided by residues Asp127 and 156–157 (DL).

The protein belongs to the UPF0677 family.

Functionally, exhibits S-adenosyl-L-methionine-dependent methyltransferase activity. The polypeptide is Putative S-adenosyl-L-methionine-dependent methyltransferase MUL_0450 (Mycobacterium ulcerans (strain Agy99)).